Reading from the N-terminus, the 246-residue chain is Receptor-transporting protein 4 (246 aa).

The Cytoplasmic portion of the chain corresponds to methionine 1 to aspartate 224. A 3CxxC-type zinc finger spans residues arginine 48–leucine 159. The helical transmembrane segment at proline 225–serine 245 threads the bilayer.

This sequence belongs to the TMEM7 family. Interacts with TASR16. Interacts with OPRD1 and OPRM1; the interaction promotes cell surface localization of the OPDR1-OPRM1 heterodimer. As to quaternary structure, (Microbial infection) Interacts with influenza A virus protein NS1; this interaction sequesters NS1 from interacting with RIG-I/DDX58 to restore antiviral signaling. As to expression, expressed in circumvallate papillae and testis.

It is found in the membrane. The protein resides in the cytoplasm. In terms of biological role, chaperone protein that facilitates the trafficking and functional cell surface expression of some G-protein coupled receptors (GPCRs). Promotes functional expression of the bitter taste receptor TAS2R16. Also promotes functional expression of the opioid receptor heterodimer OPRD1-OPRM1. In addition, acts as a potent IFN-inducible suppressor of pathogens including lyssavirus rabies, influenza A or yellow fever virus. Mechanistically, associates with the viral replicase, binds viral RNA, and thereby suppresses viral genome amplification that replicates at the endoplasmic reticulum. In addition, restores antiviral signaling by interacting with and sequestering influenza A virus protein NS1. The sequence is that of Receptor-transporting protein 4 (RTP4) from Homo sapiens (Human).